A 260-amino-acid chain; its full sequence is Outer membrane protein assembly factor BamD (260 aa).

A signal peptide spans 1-19 (MRKLKSFTFIALTAFAITA). Residue Cys-20 is the site of N-palmitoyl cysteine attachment. Cys-20 carries the S-diacylglycerol cysteine lipid modification.

The protein belongs to the BamD family. Part of the Bam complex.

It localises to the cell outer membrane. In terms of biological role, part of the outer membrane protein assembly complex, which is involved in assembly and insertion of beta-barrel proteins into the outer membrane. The polypeptide is Outer membrane protein assembly factor BamD (Pasteurella multocida (strain Pm70)).